A 384-amino-acid polypeptide reads, in one-letter code: Glucans biosynthesis protein C (384 aa).

Helical transmembrane passes span 17-37 (AWLM…THSW), 54-74 (FIHA…SYML), 91-111 (VGIP…ILLQ), 140-160 (LWFL…FTWF), 173-193 (AISL…YAAI), 212-232 (FIVM…LAFI), 240-260 (FTTP…AYLL), 274-294 (TESV…FSLG), 311-331 (ASLF…AYIT), and 338-358 (LIGF…LYEI).

It belongs to the acyltransferase 3 family. OpgC subfamily.

It is found in the cell membrane. Its pathway is glycan metabolism; osmoregulated periplasmic glucan (OPG) biosynthesis. In terms of biological role, necessary for the succinyl substitution of periplasmic glucans. Could catalyze the transfer of succinyl residues from the cytoplasmic side of the membrane to the nascent glucan backbones on the periplasmic side of the membrane. This is Glucans biosynthesis protein C from Salmonella choleraesuis (strain SC-B67).